Reading from the N-terminus, the 444-residue chain is MKKLNINDYNDILNEVLNDIRPTELEKDKLKVFSDKIIAKIKDISKYPVLDIIQVGSTARDANLKDDHDLDIFLRFEKETDRDTLKESGLRIGKEVIDYFNGKSWVEYAEHPYVSGEIEKFNLDIVPCYGIENCEKIISAVDRTPLHNEFLIMSYKNKNLSDDIRLLKKFLKGLGIYGSDLKTAGFSGYLCELLILKYGGFLSLLSDVKNWRPNKSIVLNEIYEMYDLKKEHEFLNFDDSLVVYDPVDLNRNVAAALNEENLCKFIFYSKMFLENPSKEFFYGFDKKITDFLNIRERGYLLTLEISRPENIVEDVIYPQMEKIQKSINKLIKEHDFEYIRYQNFADENTCYLSWEFLIHELPDVKIRTGPPVYSEPGVVNFITHNEHYFVKGCNVCAYKTRKYKNIQILFEDIVNGKLRKIITYPKYVCPENAEIRLGTFVERT.

ATP-binding residues include Ser57 and Arg60. Ser57 and Arg60 together coordinate CTP. Residues Asp69, Asp71, and Asp124 each coordinate Mg(2+). Residues His147, Lys168, and Tyr177 each contribute to the ATP site. CTP-binding residues include His147, Lys168, and Tyr177.

This sequence belongs to the tRNA nucleotidyltransferase/poly(A) polymerase family. Archaeal CCA-adding enzyme subfamily. As to quaternary structure, homodimer. Mg(2+) serves as cofactor.

The catalysed reaction is a tRNA precursor + 2 CTP + ATP = a tRNA with a 3' CCA end + 3 diphosphate. The enzyme catalyses a tRNA with a 3' CCA end + 2 CTP + ATP = a tRNA with a 3' CCACCA end + 3 diphosphate. In terms of biological role, catalyzes the addition and repair of the essential 3'-terminal CCA sequence in tRNAs without using a nucleic acid template. Adds these three nucleotides in the order of C, C, and A to the tRNA nucleotide-73, using CTP and ATP as substrates and producing inorganic pyrophosphate. tRNA 3'-terminal CCA addition is required both for tRNA processing and repair. Also involved in tRNA surveillance by mediating tandem CCA addition to generate a CCACCA at the 3' terminus of unstable tRNAs. While stable tRNAs receive only 3'-terminal CCA, unstable tRNAs are marked with CCACCA and rapidly degraded. This is CCA-adding enzyme from Methanococcus maripaludis (strain C5 / ATCC BAA-1333).